The following is a 221-amino-acid chain: Ras-related protein Rab-27A (221 aa).

Ser2 is subject to N-acetylserine. Ser2 carries the post-translational modification Phosphoserine. Position 16-24 (16-24 (GDSGVGKTS)) interacts with GTP. Positions 38-46 (FITTVGIDF) match the Effector region motif. Residues 74-78 (DTAGQ), 133-136 (NKSD), and 163-165 (SAA) each bind GTP. Residues Cys123 and Cys188 are joined by a disulfide bond. S-geranylgeranyl cysteine attachment occurs at residues Cys219 and Cys221. At Cys221 the chain carries Cysteine methyl ester.

The protein belongs to the small GTPase superfamily. Rab family. As to quaternary structure, binds SYTL1, SLAC2B, MYRIP, SYTL3, SYTL4 and SYTL5. Interacts with RPH3A and RPH3A. Binds MLPH and SYTL2. Interacts with UNC13D. Does not interact with the BLOC-3 complex (heterodimer of HPS1 and HPS4). Interacts (GDP-bound form preferentially) with DENND10. In terms of tissue distribution, found in all the examined tissues except in brain. Low expression was found in thymus, kidney, muscle and placenta. Detected in melanocytes, and in most tumor cell lines examined. Expressed in cytotoxic T-lymphocytes (CTL) and mast cells.

It is found in the membrane. Its subcellular location is the melanosome. It localises to the late endosome. The protein resides in the lysosome. It carries out the reaction GTP + H2O = GDP + phosphate + H(+). Its activity is regulated as follows. Regulated by guanine nucleotide exchange factors (GEFs) which promote the exchange of bound GDP for free GTP, GTPase activating proteins (GAPs) which increase the GTP hydrolysis activity, and GDP dissociation inhibitors which inhibit the dissociation of the nucleotide from the GTPase. Activated by GEFs such as DENND10. Functionally, small GTPase which cycles between active GTP-bound and inactive GDP-bound states. In its active state, binds to a variety of effector proteins to regulate homeostasis of late endocytic pathway, including endosomal positioning, maturation and secretion. Plays a role in cytotoxic granule exocytosis in lymphocytes. Required for both granule maturation and granule docking and priming at the immunologic synapse. The protein is Ras-related protein Rab-27A (RAB27A) of Homo sapiens (Human).